The chain runs to 470 residues: Sorting nexin-17 (470 aa).

A PX domain is found at M1–T109. Residues R36, S38, K62, and R75 each contribute to the a 1,2-diacyl-sn-glycero-3-phospho-(1D-myo-inositol-3-phosphate) site. Residues E115–W206 form the Ras-associating domain. The interval E115–L432 is FERM-like. The tract at residues G270–L432 is PTB-like F3 module. Phosphoserine is present on residues S336, S407, S409, S415, S421, S437, and S440. A disordered region spans residues V400–T425.

The protein belongs to the sorting nexin family. As to quaternary structure, monomer. Interacts with APP (via cytoplasmic YXNPXY motif). Interacts with KIF1B. Interacts with the C-termini of P-selectin, PTC, LDLR, VLDLR, LRP1 and LRP8. Interacts with KRIT1 (via N-terminus). Interacts with HRAS. Interacts with ITGB1 and ITGB5 (via NPxY motif). Interacts with CCDC22 and CCDC93; the interaction associates SNX17 with the CCC complex. Interacts (via C-terminus) with VPS26C and VPS35L; the interactions are direct and associate SNX17 with the retriever complex.

The protein resides in the cytoplasm. It localises to the early endosome. The protein localises to the cytoplasmic vesicle membrane. Its function is as follows. Critical regulator of endosomal recycling of numerous surface proteins, including integrins, signaling receptor and channels. Binds to NPxY sequences in the cytoplasmic tails of target cargos. Associates with retriever and CCC complexes to prevent lysosomal degradation and promote cell surface recycling of numerous cargos such as integrins ITGB1, ITGB5 and their associated alpha subunits. Also required for maintenance of normal cell surface levels of APP and LRP1. Interacts with membranes containing phosphatidylinositol 3-phosphate (PtdIns(3P)). The sequence is that of Sorting nexin-17 (SNX17) from Pongo abelii (Sumatran orangutan).